Here is a 154-residue protein sequence, read N- to C-terminus: SsrA-binding protein (154 aa).

It belongs to the SmpB family.

Its subcellular location is the cytoplasm. Its function is as follows. Required for rescue of stalled ribosomes mediated by trans-translation. Binds to transfer-messenger RNA (tmRNA), required for stable association of tmRNA with ribosomes. tmRNA and SmpB together mimic tRNA shape, replacing the anticodon stem-loop with SmpB. tmRNA is encoded by the ssrA gene; the 2 termini fold to resemble tRNA(Ala) and it encodes a 'tag peptide', a short internal open reading frame. During trans-translation Ala-aminoacylated tmRNA acts like a tRNA, entering the A-site of stalled ribosomes, displacing the stalled mRNA. The ribosome then switches to translate the ORF on the tmRNA; the nascent peptide is terminated with the 'tag peptide' encoded by the tmRNA and targeted for degradation. The ribosome is freed to recommence translation, which seems to be the essential function of trans-translation. In Synechocystis sp. (strain ATCC 27184 / PCC 6803 / Kazusa), this protein is SsrA-binding protein.